Reading from the N-terminus, the 801-residue chain is Elongation factor G, mitochondrial (801 aa).

Residues 1–65 (MRVQSLLRAQ…QKIQNQRRWQ (65 aa)) constitute a mitochondrion transit peptide. A tr-type G domain is found at 100–387 (SRVRNIGIAA…AVCDYLPNPS (288 aa)). GTP-binding positions include 109–116 (AHIDSGKT), 185–189 (DTPGH), and 239–242 (NKMD).

This sequence belongs to the TRAFAC class translation factor GTPase superfamily. Classic translation factor GTPase family. EF-G/EF-2 subfamily.

The protein resides in the mitochondrion. It participates in protein biosynthesis; polypeptide chain elongation. In terms of biological role, mitochondrial GTPase that catalyzes the GTP-dependent ribosomal translocation step during translation elongation. During this step, the ribosome changes from the pre-translocational (PRE) to the post-translocational (POST) state as the newly formed A-site-bound peptidyl-tRNA and P-site-bound deacylated tRNA move to the P and E sites, respectively. Catalyzes the coordinated movement of the two tRNA molecules, the mRNA and conformational changes in the ribosome. This is Elongation factor G, mitochondrial (mef1) from Pyrenophora tritici-repentis (strain Pt-1C-BFP) (Wheat tan spot fungus).